The following is a 237-amino-acid chain: Lectin alpha chain (237 aa).

Residues E8 and D10 each contribute to the Mn(2+) site. Residues D10, Y12, N14, and D19 each coordinate Ca(2+). 2 residues coordinate a carbohydrate: Y12 and N14. The Mn(2+) site is built by D19 and H24. 99–100 lines the a carbohydrate pocket; it reads LY. D208 serves as a coordination point for Ca(2+). An a carbohydrate-binding site is contributed by R228.

Belongs to the leguminous lectin family. In terms of assembly, homodimer and homotetramer. Oligomerization is pH-dependent with homotetramers forming at pH 4 and above.

Functionally, D-mannose/D-glucose-binding lectin. Has anti-inflammatory activity in animal models when applied intravenously. Has antinociceptive activity in mice when applied intravenously. This is Lectin alpha chain from Canavalia boliviana.